A 506-amino-acid chain; its full sequence is Alpha-L-fucosidase 1 (506 aa).

Residues 1–23 form the signal peptide; the sequence is MNSQITLFFFFFSILSLSQISNS. N-linked (GlcNAc...) asparagine glycans are attached at residues asparagine 22, asparagine 82, asparagine 248, asparagine 320, asparagine 355, and asparagine 487.

The protein belongs to the glycosyl hydrolase 29 family.

The protein localises to the secreted. The protein resides in the extracellular space. Its subcellular location is the apoplast. The enzyme catalyses an alpha-L-fucoside + H2O = L-fucose + an alcohol. Hydrolyzes both 3- and 4-linked fucoses in Lewis determinants. Not active on neither 2-linked fucose nor on fucose in alpha-1,3-linkage to the innermost GlcNAc. This Arabidopsis thaliana (Mouse-ear cress) protein is Alpha-L-fucosidase 1 (FUC1).